Consider the following 937-residue polypeptide: Periplasmic nitrate reductase (937 aa).

A signal peptide (tat-type signal) is located at residues 1 to 31 (MSMNRREFLKTTAAAAAASAVGISIPSEAKA). The 4Fe-4S Mo/W bis-MGD-type domain occupies 40-96 (WQWDKAVCRFCGTGCGIMVAVKDDKIVAVKGDPESPVNRGINCIKGYFNAKIMYGAD). Positions 47, 50, 54, and 82 each coordinate [4Fe-4S] cluster. Residues lysine 84, glutamine 152, asparagine 177, cysteine 181, 214–221 (WGANMAEM), methionine 422, glutamine 426, asparagine 532, lysine 580, aspartate 607, and 827–836 (TGRVLEHWHS) contribute to the Mo-bis(molybdopterin guanine dinucleotide) site. Tryptophan 903 is a substrate binding site. 2 residues coordinate Mo-bis(molybdopterin guanine dinucleotide): asparagine 911 and lysine 928.

It belongs to the prokaryotic molybdopterin-containing oxidoreductase family. NasA/NapA/NarB subfamily. Component of the periplasmic nitrate reductase NapAB complex composed of NapA and NapB. Requires [4Fe-4S] cluster as cofactor. The cofactor is Mo-bis(molybdopterin guanine dinucleotide). Predicted to be exported by the Tat system. The position of the signal peptide cleavage has not been experimentally proven.

The protein localises to the periplasm. The enzyme catalyses 2 Fe(II)-[cytochrome] + nitrate + 2 H(+) = 2 Fe(III)-[cytochrome] + nitrite + H2O. Catalytic subunit of the periplasmic nitrate reductase complex NapAB. Receives electrons from NapB and catalyzes the reduction of nitrate to nitrite. This Nautilia profundicola (strain ATCC BAA-1463 / DSM 18972 / AmH) protein is Periplasmic nitrate reductase.